We begin with the raw amino-acid sequence, 272 residues long: TIP41-like protein (272 aa).

N6-acetyllysine is present on Lys106. An interaction with PPP2CA region spans residues 173-272 (RVMPSSFFLL…ADSQKSTQVE (100 aa)). Ser265 is modified (phosphoserine).

This sequence belongs to the TIP41 family. As to quaternary structure, isoform 1 interacts with PPP2CA. Isoform 2 does not interact with PPP2CA. Interacts with PPP2CB, PPP4C and PPP6C. Interacts with IGBP1; the interaction is dependent on PPP2CA. Associates with a protein phosphatase 2A PP2A(C):IGBP1 complex. Interacts with PPP4C and PPP4R2.

The protein localises to the cytoplasm. Functionally, may be a allosteric regulator of serine/threonine-protein phosphatase 2A (PP2A). Isoform 1 inhibits catalytic activity of the PP2A(D) core complex in vitro. The PP2A(C):TIPRL complex does not show phosphatase activity. Acts as a negative regulator of serine/threonine-protein phosphatase 4 probably by inhibiting the formation of the active PPP4C:PPP4R2 complex; the function is proposed to implicate it in DNA damage response by promoting H2AX phosphorylated on Ser-140 (gamma-H2AX). May play a role in the regulation of ATM/ATR signaling pathway controlling DNA replication and repair. In Homo sapiens (Human), this protein is TIP41-like protein (TIPRL).